The sequence spans 598 residues: Dihydroxy-acid dehydratase astD, mitochondrial (598 aa).

The N-terminal 111 residues, methionine 1 to phenylalanine 111, are a transit peptide targeting the mitochondrion. Residues arginine 23 to lysine 50 form a disordered region. Residues asparagine 40–lysine 50 show a composition bias toward polar residues. Cysteine 86 lines the [2Fe-2S] cluster pocket. Aspartate 118 serves as a coordination point for Mg(2+). Residue cysteine 159 coordinates [2Fe-2S] cluster. Position 160 (aspartate 160) interacts with Mg(2+). [2Fe-2S] cluster is bound at residue cysteine 232. Glutamate 485 is a Mg(2+) binding site. Catalysis depends on serine 511, which acts as the Proton acceptor.

Belongs to the IlvD/Edd family. [2Fe-2S] cluster is required as a cofactor. Requires Mg(2+) as cofactor.

It localises to the mitochondrion. It catalyses the reaction (2R)-2,3-dihydroxy-3-methylbutanoate = 3-methyl-2-oxobutanoate + H2O. The catalysed reaction is (2R,3R)-2,3-dihydroxy-3-methylpentanoate = (S)-3-methyl-2-oxopentanoate + H2O. It participates in amino-acid biosynthesis; L-isoleucine biosynthesis; L-isoleucine from 2-oxobutanoate: step 3/4. The protein operates within amino-acid biosynthesis; L-valine biosynthesis; L-valine from pyruvate: step 3/4. With respect to regulation, DHAD activity is not inhibited by the dihydroxyacid dehydratase inhibitor aspterric acid (AA). Functionally, dihydroxyacid dehydratase; part of the gene cluster that mediates the biosynthesis of the sesquiterpenoid aspterric acid (AA), an inhibitor of dihydroxy-acid dehydratase (DHAD) effective as an herbicide. Performs the third step in the common pathway leading to biosynthesis of branched-chain amino acids. Catalyzes the dehydration of (2R,3R)-2,3-dihydroxy-3-methylpentanoate (2,3-dihydroxy-3-methylvalerate) into 2-oxo-3-methylpentanoate (2-oxo-3-methylvalerate) and of (2R)-2,3-dihydroxy-3-methylbutanoate (2,3-dihydroxyisovalerate) into 2-oxo-3-methylbutanoate (2-oxoisovalerate), the penultimate precursor to L-isoleucine and L-valine, respectively. AstD confers self-resistance in the presence of the dihydroxyacid dehydratase inhibitor aspterric acid (AA) produced by the ast cluster. This is Dihydroxy-acid dehydratase astD, mitochondrial from Aspergillus terreus (strain NIH 2624 / FGSC A1156).